The chain runs to 1045 residues: Protein phosphatase Slingshot (1045 aa).

The span at 1–20 (MALVTVQRSPSVAGSCSNSD) shows a compositional bias: polar residues. Disordered stretches follow at residues 1–35 (MALV…GNDR), 58–80 (TQSE…SNNS), 143–194 (KVGG…DNKN), and 306–325 (ESRR…EKEE). A compositionally biased stretch (low complexity) spans 66–80 (TDSTRSSNSTQSNNS). Residues 149-174 (GTKSSTSPAVPTQRQLSVEQTATEAS) show a composition bias toward polar residues. Residues 175–185 (SKCDKTADKEN) show a composition bias toward basic and acidic residues. A DEK-C domain is found at 324–379 (EETESVIKMKLKAIMMSVDLDEVTSKYIRGRLEEILDMDLGEYKSFIDAEMLVILG). The region spanning 383–524 (APTKIFEHVY…LETYSGMLDA (142 aa)) is the Tyrosine-protein phosphatase domain. The active-site Phosphocysteine intermediate is Cys-468. Positions 529–547 (EKLQRSKSETNLKSTKDAR) are enriched in basic and acidic residues. Disordered regions lie at residues 529-631 (EKLQ…PERS), 699-799 (SHLG…GDNR), and 1001-1045 (ACSA…SDSS). Residues 560–569 (ALNQAKSKST) are compositionally biased toward polar residues. A compositionally biased stretch (basic residues) spans 586–601 (MHRRSIAQKSQRRMVR). The span at 602–625 (RSSSTSPKTQTAVVTKQQSQSMEN) shows a compositional bias: polar residues. The span at 704-713 (SVSGSSSGNI) shows a compositional bias: low complexity. The residue at position 719 (Ser-719) is a Phosphoserine. Residues 721-732 (CSDVFSSQVDSV) are compositionally biased toward low complexity. Polar residues-rich tracts occupy residues 764-774 (TPQQQKQQSNA) and 1008-1021 (KKTT…SSPV). Positions 1029–1045 (SAASNSNSSASNSSDSS) are enriched in low complexity.

The protein belongs to the protein-tyrosine phosphatase family. Interacts with actin.

It localises to the cytoplasm. It is found in the cytoskeleton. The enzyme catalyses O-phospho-L-tyrosyl-[protein] + H2O = L-tyrosyl-[protein] + phosphate. It catalyses the reaction O-phospho-L-seryl-[protein] + H2O = L-seryl-[protein] + phosphate. The catalysed reaction is O-phospho-L-threonyl-[protein] + H2O = L-threonyl-[protein] + phosphate. In terms of biological role, protein phosphatase which regulates actin filament dynamics. Dephosphorylates and activates the actin binding/depolymerizing factor tsr/cofilin, which subsequently binds to actin filaments and stimulates their disassembly. Required for axon growth. This Drosophila melanogaster (Fruit fly) protein is Protein phosphatase Slingshot (ssh).